The following is a 492-amino-acid chain: Heat shock factor protein 4 (492 aa).

The DNA-binding element occupies 17–121 (VPAFLGKLWA…QLLERVRRKV (105 aa)). The tract at residues 129-203 (GRWRPEDLGR…GPLQAGPSNA (75 aa)) is hydrophobic repeat HR-A/B. The segment at 245–322 (LPETNLGLSP…ECDFCVTAPP (78 aa)) is interactions with DUSP26, MAPK1 and MAPK2. The segment at 246–285 (PETNLGLSPHRARGPIISDIPEDSPSPEGTRLSPSSDGRR) is disordered. Residue lysine 293 forms a Glycyl lysine isopeptide (Lys-Gly) (interchain with G-Cter in SUMO) linkage. Serine 298 is subject to Phosphoserine. Positions 337–400 (GSFSPEGPRN…PAGPLDVLGP (64 aa)) are disordered. The segment at 364-389 (LGLESGDRSPESLLPPMLLQPPQESV) is hydrophobic repeat HR-C. The segment covering 374-388 (ESLLPPMLLQPPQES) has biased composition (low complexity).

It belongs to the HSF family. Homotrimer. Exhibits constitutive DNA binding and forms trimers even in the absence of stress. Interacts with ALKBH4, DUSP26, MAPK1, MAPK2, MAPK8 and MAP kinase p38. In terms of processing, phosphorylated mainly on serine residues. Phosphorylation on Ser-298 promotes sumoylation on Lys-293. Isoform HSF4B is constitutively sumoylated. Sumoylation represses the transcriptional activity and is promoted by phosphorylation on Ser-298. HSFA is not sumoylated. As to expression, expressed in heart, skeletal muscle, eye and brain, and at much lower levels in some other tissues.

Its subcellular location is the nucleus. Its function is as follows. Heat-shock transcription factor that specifically binds heat shock promoter elements (HSE). Required for denucleation and organelle rupture and degradation that occur during eye lens terminal differentiation, when fiber cells that compose the lens degrade all membrane-bound organelles in order to provide lens with transparency to allow the passage of light. In this process, may regulate denucleation of lens fiber cells in part by activating DNASE2B transcription. May be involved in DNA repair through the transcriptional regulation of RAD51. May up-regulate p53/TP53 protein in eye lens fiber cells, possibly through protein stabilization. In the eye lens, controls the expression of alpha-crystallin B chain/CRYAB and consequently may be involved in the regulation of lysosomal acidification. Transcriptional repressor. Functionally, transcriptional activator. This Homo sapiens (Human) protein is Heat shock factor protein 4 (HSF4).